The following is a 147-amino-acid chain: Globin (147 aa).

N-acetylserine is present on serine 2. Residues 2 to 147 form the Globin domain; sequence SLSAAEADLA…IIDALKAAGK (146 aa). Residue histidine 96 participates in heme b binding.

It belongs to the globin family. Monomer.

The protein is Globin of Aplysia limacina (Sea hare).